The sequence spans 31 residues: Cytochrome b6-f complex subunit 6 (31 aa).

The chain crosses the membrane as a helical span at residues 4-26 (LTSYFGFLLAALTITSALFIGLS).

The protein belongs to the PetL family. In terms of assembly, the 4 large subunits of the cytochrome b6-f complex are cytochrome b6, subunit IV (17 kDa polypeptide, PetD), cytochrome f and the Rieske protein, while the 4 small subunits are PetG, PetL, PetM and PetN. The complex functions as a dimer.

The protein resides in the plastid. It is found in the chloroplast thylakoid membrane. Functionally, component of the cytochrome b6-f complex, which mediates electron transfer between photosystem II (PSII) and photosystem I (PSI), cyclic electron flow around PSI, and state transitions. PetL is important for photoautotrophic growth as well as for electron transfer efficiency and stability of the cytochrome b6-f complex. The protein is Cytochrome b6-f complex subunit 6 of Aethionema cordifolium (Lebanon stonecress).